The chain runs to 463 residues: A-type ATP synthase subunit B (463 aa).

This sequence belongs to the ATPase alpha/beta chains family. In terms of assembly, has multiple subunits with at least A(3), B(3), C, D, E, F, H, I and proteolipid K(x).

It localises to the cell membrane. Functionally, component of the A-type ATP synthase that produces ATP from ADP in the presence of a proton gradient across the membrane. The B chain is a regulatory subunit. The chain is A-type ATP synthase subunit B from Saccharolobus islandicus (strain Y.N.15.51 / Yellowstone #2) (Sulfolobus islandicus).